Reading from the N-terminus, the 326-residue chain is Phospho-N-acetylmuramoyl-pentapeptide-transferase (326 aa).

Helical transmembrane passes span 2-22, 51-71, 73-93, 113-133, 143-163, 175-195, 199-219, 225-245, 250-270, and 305-325; these read ILATKVFFTSFVFGFILFPYF, VPPMGGIIILISSLLPILLWA, LTPEILLLILITLFFALLGFI, ILIQFIVALVGVFILKLYSAE, GVIIDFGYLYVPFAAFVIVGS, GLAATQVITSFAFLGLIAYIT, MNITLFCIAFIGAILSFLWFN, IFMGDVGSLSVGAALGLTSVL, MLFAIIGIIFVIETLSVIIQI, and VIVMKFWIISIICSVFTITFL.

This sequence belongs to the glycosyltransferase 4 family. MraY subfamily. It depends on Mg(2+) as a cofactor.

It is found in the cell membrane. The catalysed reaction is UDP-N-acetyl-alpha-D-muramoyl-L-alanyl-gamma-D-glutamyl-meso-2,6-diaminopimeloyl-D-alanyl-D-alanine + di-trans,octa-cis-undecaprenyl phosphate = di-trans,octa-cis-undecaprenyl diphospho-N-acetyl-alpha-D-muramoyl-L-alanyl-D-glutamyl-meso-2,6-diaminopimeloyl-D-alanyl-D-alanine + UMP. It functions in the pathway cell wall biogenesis; peptidoglycan biosynthesis. Its function is as follows. Catalyzes the initial step of the lipid cycle reactions in the biosynthesis of the cell wall peptidoglycan: transfers peptidoglycan precursor phospho-MurNAc-pentapeptide from UDP-MurNAc-pentapeptide onto the lipid carrier undecaprenyl phosphate, yielding undecaprenyl-pyrophosphoryl-MurNAc-pentapeptide, known as lipid I. In Wolbachia pipientis wMel, this protein is Phospho-N-acetylmuramoyl-pentapeptide-transferase.